Reading from the N-terminus, the 199-residue chain is Prolactin (199 aa).

A disulfide bridge connects residues cysteine 4 and cysteine 11. Serine 26 carries the phosphoserine modification. Asparagine 31 is a glycosylation site (N-linked (GlcNAc...) asparagine; partial). Phosphoserine occurs at positions 34 and 90. Intrachain disulfides connect cysteine 58-cysteine 174 and cysteine 191-cysteine 199.

Belongs to the somatotropin/prolactin family. Interacts with PRLR.

The protein localises to the secreted. In terms of biological role, prolactin acts primarily on the mammary gland by promoting lactation. The sequence is that of Prolactin (PRL) from Camelus dromedarius (Dromedary).